Here is a 255-residue protein sequence, read N- to C-terminus: Small ribosomal subunit protein uS2 (255 aa).

The segment at 230–255 (QGSSGRDLGASSEVPVEPALEEAAEG) is disordered.

This sequence belongs to the universal ribosomal protein uS2 family.

This is Small ribosomal subunit protein uS2 from Rhizobium johnstonii (strain DSM 114642 / LMG 32736 / 3841) (Rhizobium leguminosarum bv. viciae).